We begin with the raw amino-acid sequence, 293 residues long: N-acetylmannosamine kinase (293 aa).

ATP contacts are provided by residues 5 to 12 (AIDIGGTK) and 133 to 140 (GVGGGLVI). Histidine 157, cysteine 167, cysteine 169, and cysteine 174 together coordinate Zn(2+).

Belongs to the ROK (NagC/XylR) family. NanK subfamily. In terms of assembly, homodimer.

It carries out the reaction an N-acyl-D-mannosamine + ATP = an N-acyl-D-mannosamine 6-phosphate + ADP + H(+). It functions in the pathway amino-sugar metabolism; N-acetylneuraminate degradation; D-fructose 6-phosphate from N-acetylneuraminate: step 2/5. Functionally, catalyzes the phosphorylation of N-acetylmannosamine (ManNAc) to ManNAc-6-P. The sequence is that of N-acetylmannosamine kinase from Vibrio vulnificus (strain YJ016).